We begin with the raw amino-acid sequence, 150 residues long: 3-hydroxyacyl-[acyl-carrier-protein] dehydratase FabZ (150 aa).

H51 is an active-site residue.

The protein belongs to the thioester dehydratase family. FabZ subfamily.

It is found in the cytoplasm. It carries out the reaction a (3R)-hydroxyacyl-[ACP] = a (2E)-enoyl-[ACP] + H2O. Its function is as follows. Involved in unsaturated fatty acids biosynthesis. Catalyzes the dehydration of short chain beta-hydroxyacyl-ACPs and long chain saturated and unsaturated beta-hydroxyacyl-ACPs. The polypeptide is 3-hydroxyacyl-[acyl-carrier-protein] dehydratase FabZ (Legionella pneumophila (strain Paris)).